Consider the following 580-residue polypeptide: Trafficking protein particle complex subunit 14 (580 aa).

Disordered stretches follow at residues glycine 95–glycine 134 and valine 480–serine 533. A compositionally biased stretch (gly residues) spans proline 105 to phenylalanine 116. Serine 491 is modified (phosphoserine). Low complexity predominate over residues arginine 492 to arginine 502. The segment covering leucine 512–arginine 525 has biased composition (polar residues). Serine 517 carries the post-translational modification Phosphoserine. Threonine 541 is modified (phosphothreonine). Serine 546 is subject to Phosphoserine.

Component of the multisubunit TRAPP II complex, which includes at least TRAPPC1, TRAPPC2, TRAPPC2L, TRAPPC3, TRAPPC4, TRAPPC5, TRAPPC6A/B, TRAPPC9, TRAPPC10 and TRAPPC14. TRAPPC9, TRAPPC10 and TRAPPC14 are specific subunits of the TRAPP II complex. Interacts with alpha-tubulin during mitosis. Interacts with RAB3IP (via the N-terminal region); this interaction mediates RAB3IP association with the TRAPP II complex. Interacts with TRAPPC10. Interacts with FBF1.

The protein resides in the cytoplasm. It localises to the cytoskeleton. The protein localises to the spindle. It is found in the vesicle. Its subcellular location is the midbody. Specific subunit of the TRAPP (transport protein particle) II complex, a highly conserved vesicle tethering complex that functions in late Golgi trafficking as a membrane tether. TRAPPC14 is dispensable for TRAPPII complex integrity but mediates RAB3IP preciliary vesicle trafficking to the mother centriole during ciliogenesis. Modulates YAP1 activity as transcriptional regulator. This chain is Trafficking protein particle complex subunit 14, found in Mus musculus (Mouse).